We begin with the raw amino-acid sequence, 229 residues long: Flagellar L-ring protein (229 aa).

A signal peptide spans 1-25 (MKQVRLLPPAPVRAVCALAVAALAG). Cys-26 is lipidated: N-palmitoyl cysteine. Residue Cys-26 is the site of S-diacylglycerol cysteine attachment.

This sequence belongs to the FlgH family. As to quaternary structure, the basal body constitutes a major portion of the flagellar organelle and consists of four rings (L,P,S, and M) mounted on a central rod.

It is found in the cell outer membrane. The protein resides in the bacterial flagellum basal body. In terms of biological role, assembles around the rod to form the L-ring and probably protects the motor/basal body from shearing forces during rotation. In Burkholderia ambifaria (strain ATCC BAA-244 / DSM 16087 / CCUG 44356 / LMG 19182 / AMMD) (Burkholderia cepacia (strain AMMD)), this protein is Flagellar L-ring protein.